The primary structure comprises 843 residues: MAQVLHVPAPFPGTPGQASPAAFPSKEPDPPYSVETPYGYRLDLDFLKYVDDIEKGHTLRRVAVQRRPRLGSLPRGPGSWWTSTESLCSDASGDSRHSAYSYCGRGFYPQYGALETRIGSNPRVERTLLDARRRLEDQAAAPSSGGLGSLTPSAAGSTSSLAGVGLLPPTPRSSGLSTPVAPSAGHLAHVREQMAGALRKLRQLEEQVKLIPVLQVKLSVLQEEKRQLTVQLKSQKFLGHPSGTRSRSELCLDLPEAPDDPAALETRSVGTWVRERDLGIPDGEAALVAKVAVLETQLKKALQELRAAQTQQVDLQPQAWPPPDTQVRVDTVRVVEGPREVEVAASTAAGALAQRAQSLEPYGTGLKALTTSGGPENTLVFRSHEVVETMCPLPTATTGNVHTAKKISITERSCTGAPRMTEPSSVNPRPAAASVVQPENPVPAAQDTTDKKPTRPAAASQDSQAADGAGRASLATKRKEDPADPEVNQRNLQFVGVNGGYESPSEDSSTAENSEHESTENEGPEPPARVLSPAECPQLRPPGAAVATTSLEGPQLSQESQRVPAPEVASGPDPEEEIRMDLSPDLISACLALEKYLENPNALTERELKVAYTTVLQEWLRLACRSDAHPELVRRHLVTFRAMSARLLDYVVNIADSNGNTALHYSVSHANFPVVRQLLDSGVCHVDKLNRAGYSPIMLTALATLKTQDDIETILQLFRLGNVNAKASQAGQTALMLAVSHGRVDVVRALLACEADVNIQDEDGSTALMCACEHGHKEITGLLLAVPSCDISLTDRDGSTALMVALDAGQSEIASMLYSRMNIKCSFAPMSDYESPASSSAEE.

The interval 1–31 (MAQVLHVPAPFPGTPGQASPAAFPSKEPDPP) is disordered. Residues 1 to 72 (MAQVLHVPAP…AVQRRPRLGS (72 aa)) form an interaction with AIFM1 region. Residues Ser-19, Ser-83, Ser-86, Ser-89, and Ser-92 each carry the phosphoserine modification. Arg-105 carries the omega-N-methylarginine modification. The interval 161–182 (LAGVGLLPPTPRSSGLSTPVAP) is disordered. Thr-170 is subject to Phosphothreonine. 2 coiled-coil regions span residues 183–234 (SAGH…QLKS) and 282–313 (DGEA…TQQV). The residue at position 331 (Thr-331) is a Phosphothreonine. Residue Ser-358 is modified to Phosphoserine. The disordered stretch occupies residues 410-577 (TERSCTGAPR…VASGPDPEEE (168 aa)). A compositionally biased stretch (low complexity) spans 457–470 (AAASQDSQAADGAG). Ser-532 is subject to Phosphoserine. The span at 547-561 (ATTSLEGPQLSQESQ) shows a compositional bias: polar residues. The ANK 0; degenerate repeat unit spans residues 606 to 643 (RELKVAYTTVLQEWLRLACRSDAHPELVRRHLVTFRAM). Residues 661 to 827 (TALHYSVSHA…YSRMNIKCSF (167 aa)) are interaction with NCOA1. 5 ANK repeats span residues 673–703 (PVVR…TALA), 707–740 (TQDD…LAVS), 745–774 (DVVR…ACEH), 778–808 (EITG…ALDA), and 812–842 (EIAS…SSAE).

As to quaternary structure, interacts (non-phosphorylated form) with NCOA1; NCOA2 AND NCOA3. Interacts with AIFM1. Interacts with ARHGDIA; the interaction is direct and may regulate the interaction of ARHGDIA with RHOA, RAC1 and CDC42. Interacts (via ANK repeats 1-5) with KIF21A (via residues 1148-1169). Post-translationally, phosphorylated by casein kinase II upon estrogen stimulation. Phosphorylation induces the release by KANK2 of NCOA1 and its translocation to the nucleus where NCOA1 can activate gene transcription. In terms of tissue distribution, widely expressed with highest levels in liver and skeletal muscle.

Its subcellular location is the cytoplasm. It localises to the mitochondrion. In terms of biological role, involved in transcription regulation by sequestering in the cytoplasm nuclear receptor coactivators such as NCOA1, NCOA2 and NCOA3. Involved in regulation of caspase-independent apoptosis by sequestering the proapoptotic factor AIFM1 in mitochondria. Pro-apoptotic stimuli can induce its proteasomal degradation allowing the translocation of AIFM1 to the nucleus to induce apoptosis. Involved in the negative control of vitamin D receptor signaling pathway. Involved in actin stress fibers formation through its interaction with ARHGDIA and the regulation of the Rho signaling pathway. May thereby play a role in cell adhesion and migration, regulating for instance podocytes migration during development of the kidney. Through the Rho signaling pathway may also regulate cell proliferation. The chain is KN motif and ankyrin repeat domain-containing protein 2 (Kank2) from Mus musculus (Mouse).